Reading from the N-terminus, the 591-residue chain is L-fucose isomerase (591 aa).

Active-site proton acceptor residues include E337 and D361. Mn(2+) is bound by residues E337, D361, and H528.

This sequence belongs to the L-fucose isomerase family. In terms of assembly, homohexamer. The cofactor is Mn(2+).

It localises to the cytoplasm. The enzyme catalyses L-fucose = L-fuculose. It functions in the pathway carbohydrate degradation; L-fucose degradation; L-lactaldehyde and glycerone phosphate from L-fucose: step 1/3. Functionally, converts the aldose L-fucose into the corresponding ketose L-fuculose. This Escherichia coli O6:H1 (strain CFT073 / ATCC 700928 / UPEC) protein is L-fucose isomerase.